The chain runs to 366 residues: MVPPTGERSLTKAISARALRKVYPGTPPVEALGGVDIDIADNEFFTLLGPSGCGKTTILRLIAGFEHPTSGSLDMFGQSLLDLPPYKRQINTVFQSYALFPHMSVAENIGFGLEMLGKPKSEIKSTVAEMMDLVQMSHLADRQTSQISGGQQQRVALARALAPKPRVLLLDEPLSALDFKLRKNMQLELKRLQTETGITFIFVTHDQEEALTMSDRIAVMSDGAIRQIGSPRDIYDHPADRFVADFIGDTNFLPADVIATEGERVSLRLGSGKTITAPARHAGGGRVTLAVRPEHARLEAEDSGLLPGVLSDAVYFGTDTHFHIALDDGTAFVLRQQNSPDTETRFAKGERVSVSFPGEVAQVLRD.

An ABC transporter domain is found at 14-247 (ISARALRKVY…PADRFVADFI (234 aa)). 49–56 (GPSGCGKT) serves as a coordination point for ATP.

The protein belongs to the ABC transporter superfamily. Spermidine/putrescine importer (TC 3.A.1.11.1) family. As to quaternary structure, the complex is composed of two ATP-binding proteins (PotA), two transmembrane proteins (PotB and PotC) and a solute-binding protein (PotD).

It is found in the cell inner membrane. It carries out the reaction ATP + H2O + polyamine-[polyamine-binding protein]Side 1 = ADP + phosphate + polyamineSide 2 + [polyamine-binding protein]Side 1.. Its function is as follows. Part of the ABC transporter complex PotABCD involved in spermidine/putrescine import. Responsible for energy coupling to the transport system. In Ruegeria pomeroyi (strain ATCC 700808 / DSM 15171 / DSS-3) (Silicibacter pomeroyi), this protein is Spermidine/putrescine import ATP-binding protein PotA.